The chain runs to 205 residues: MESKLRVGIAGPVGSGKTAIIQRLCENLKDRLEIAVVTNDIYTQEDAKFLTNSKALAPERIKGVETGGCPHTAIREDCSINRIAVEELEHEFTTLDLVFVESGGDNLAASFSPELVDVCIYIIDVAAGDKIPRKGGPGITRSDLLVINKIDLAEMVGASLKIMERDTLLMRKNLPWCFTNTKTGEGIKIIAEFLCNQIPFARKMV.

11–18 (GPVGSGKT) serves as a coordination point for GTP.

This sequence belongs to the SIMIBI class G3E GTPase family. UreG subfamily. As to quaternary structure, homodimer. UreD, UreF and UreG form a complex that acts as a GTP-hydrolysis-dependent molecular chaperone, activating the urease apoprotein by helping to assemble the nickel containing metallocenter of UreC. The UreE protein probably delivers the nickel.

It localises to the cytoplasm. Functionally, facilitates the functional incorporation of the urease nickel metallocenter. This process requires GTP hydrolysis, probably effectuated by UreG. The polypeptide is Urease accessory protein UreG (Prochlorococcus marinus (strain NATL1A)).